The primary structure comprises 333 residues: Arylacetonitrilase (333 aa).

A CN hydrolase domain is found at 9 to 284; that stretch reads VRVAVTQAEP…EGIIYADLEM (276 aa). Residue Glu49 is the Proton acceptor of the active site. Residue Lys129 is part of the active site. Cys164 acts as the Nucleophile in catalysis.

It belongs to the carbon-nitrogen hydrolase superfamily. Nitrilase family.

It carries out the reaction a nitrile + 2 H2O = a carboxylate + NH4(+). The catalysed reaction is 4-chlorophenylacetonitrile + 2 H2O = 4-chlorophenylacetate + NH4(+). In terms of biological role, nitrilase that hydrolyzes preferentially phenylacetonitrile, (R,S)-mandelonitrile, and 3-indolylacetonitrile. The sequence is that of Arylacetonitrilase from Aspergillus oryzae (strain ATCC 42149 / RIB 40) (Yellow koji mold).